The following is a 304-amino-acid chain: Pyridoxal 5'-phosphate synthase subunit pyroA (304 aa).

Asp28 contributes to the D-ribose 5-phosphate binding site. Residue Lys85 is the Schiff-base intermediate with D-ribose 5-phosphate of the active site. Gly157 is a D-ribose 5-phosphate binding site. Arg169 serves as a coordination point for D-glyceraldehyde 3-phosphate. D-ribose 5-phosphate contacts are provided by residues Gly224 and 245–246 (GS).

It belongs to the PdxS/SNZ family.

It catalyses the reaction aldehydo-D-ribose 5-phosphate + D-glyceraldehyde 3-phosphate + L-glutamine = pyridoxal 5'-phosphate + L-glutamate + phosphate + 3 H2O + H(+). The protein operates within cofactor biosynthesis; pyridoxal 5'-phosphate biosynthesis. In terms of biological role, catalyzes the formation of pyridoxal 5'-phosphate from ribose 5-phosphate (RBP), glyceraldehyde 3-phosphate (G3P) and ammonia. The ammonia is provided by PDX2. Can also use ribulose 5-phosphate and dihydroxyacetone phosphate as substrates, resulting from enzyme-catalyzed isomerization of RBP and G3P, respectively. Also plays an indirect role in resistance to singlet oxygen-generating photosensitizers. In Emericella nidulans (strain FGSC A4 / ATCC 38163 / CBS 112.46 / NRRL 194 / M139) (Aspergillus nidulans), this protein is Pyridoxal 5'-phosphate synthase subunit pyroA (pyroA).